The chain runs to 448 residues: MSDNVPTIAAVATAPGRGGVGVIRISGKNLLPMAQALCGKTPKPRTATYADFTDTDGQAIDSGLLLFFAAPASFTGEDVIELQGHGGPVVMDMLLNRCLELGARLAEPGEFTKRAFLNDKLDLAQAEGVADLIDASSRSAARLALRSLKGDFSRRIHGLVEDLITLRMLVEATLDFPEEDIDFLEAADARGKLDGLRRAVDDVLANAQQGAILREGLNVVLVGAPNVGKSSLLNALAGDEVAIVTDIAGTTRDAVRERILIDGVPVHIVDTAGLRETDDVVERIGIERSRKAVSEADVALVLVDPREGLNEKTRAILDALPPELKRIEIHSKSDLHAHAAGGFGTGAETVIALSAKTGDGLDALKRTLLREAGWQGESEGLFLARTRHVNALKAAQEELSLAALCGNHQIELFAEHLRLAQVACGEITGEFTADDLLGVIFSRFCIGK.

(6S)-5-formyl-5,6,7,8-tetrahydrofolate-binding residues include Arg-24, Glu-81, and Lys-120. Positions 216–373 constitute a TrmE-type G domain; sequence GLNVVLVGAP…LKRTLLREAG (158 aa). Asn-226 serves as a coordination point for K(+). GTP contacts are provided by residues 226–231, 245–251, and 270–273; these read NVGKSS, TDIAGTT, and DTAG. Ser-230 contacts Mg(2+). Positions 245, 247, and 250 each coordinate K(+). Residue Thr-251 coordinates Mg(2+). Lys-448 provides a ligand contact to (6S)-5-formyl-5,6,7,8-tetrahydrofolate.

The protein belongs to the TRAFAC class TrmE-Era-EngA-EngB-Septin-like GTPase superfamily. TrmE GTPase family. As to quaternary structure, homodimer. Heterotetramer of two MnmE and two MnmG subunits. K(+) serves as cofactor.

The protein resides in the cytoplasm. Exhibits a very high intrinsic GTPase hydrolysis rate. Involved in the addition of a carboxymethylaminomethyl (cmnm) group at the wobble position (U34) of certain tRNAs, forming tRNA-cmnm(5)s(2)U34. In Neisseria meningitidis serogroup B (strain ATCC BAA-335 / MC58), this protein is tRNA modification GTPase MnmE.